Consider the following 496-residue polypeptide: Transmembrane protein 104 (496 aa).

Residues 1-10 lie on the Cytoplasmic side of the membrane; sequence MAGEITETGE. Residues 11–31 form a helical membrane-spanning segment; the sequence is LYSSYVGLVYMFNLIVGTGAL. Residues 32-36 are Extracellular-facing; it reads TMPKA. The helical transmembrane segment at 37–57 threads the bilayer; the sequence is FATAGWLVSLVLLVFLGFMSF. Residues 58–146 lie on the Cytoplasmic side of the membrane; the sequence is VTTTFVIEAM…SMFFNKVGVN (89 aa). Residues 147–167 form a helical membrane-spanning segment; it reads LFYFCIIVYLYGDLAIYAAAV. Residues 168–204 lie on the Extracellular side of the membrane; the sequence is PFSLMQVTCSATGNDSCGVEADTKYNDTDRCWGPLRR. An N-linked (GlcNAc...) asparagine glycan is attached at Asn-193. The chain crosses the membrane as a helical span at residues 205 to 225; sequence VDAYRIYLAIFTLLLGPFTFF. The Cytoplasmic segment spans residues 226–233; sequence DVQKTKYL. A helical membrane pass occupies residues 234–254; that stretch reads QILTSLMRWIAFAVMIVLALI. Topologically, residues 255–276 are extracellular; sequence RIGHGQGEGHPPLADFSGVRNL. The helical transmembrane segment at 277–297 threads the bilayer; that stretch reads FGVCVYSFMCQHSLPSLITPV. Residues 298–306 lie on the Cytoplasmic side of the membrane; that stretch reads SSKRHLTRL. The chain crosses the membrane as a helical span at residues 307–327; sequence VFLDYVLILAFYGLLSFTAIF. Topologically, residues 328–354 are extracellular; that stretch reads CFRGDSLMDMYTLNFARCDVVGLAAVR. A helical transmembrane segment spans residues 355-375; it reads FFLGLFPVFTISTNFPIIAVT. Residues 376–397 lie on the Cytoplasmic side of the membrane; that stretch reads LRNNWKTLFHREGGTYPWVVDR. The helical transmembrane segment at 398 to 418 threads the bilayer; the sequence is VVFPTITLVPPVLVAFCTHDL. At 419–421 the chain is on the extracellular side; sequence ESL. The chain crosses the membrane as a helical span at residues 422 to 442; it reads VGITGAYAGTGIQYVIPAFLV. Residues 443 to 470 are Cytoplasmic-facing; that stretch reads YHCRRDTQLAFGCGVSNKHRSPFRHTFW. The helical transmembrane segment at 471 to 491 threads the bilayer; sequence VGFVLLWAFSCFIFVTANIIL. Topologically, residues 492 to 496 are extracellular; it reads SETKL.

Belongs to the TMEM104 family.

The protein localises to the membrane. This chain is Transmembrane protein 104 (TMEM104), found in Homo sapiens (Human).